A 147-amino-acid polypeptide reads, in one-letter code: Hemoglobin subunit beta (147 aa).

In terms of domain architecture, Globin spans 3–147; that stretch reads EWTDDERAII…VVSALGRQYH (145 aa). Residues histidine 64 and histidine 93 each coordinate heme b.

It belongs to the globin family. In terms of assembly, heterotetramer of two alpha chains and two beta chains. Red blood cells.

Functionally, involved in oxygen transport from gills to the various peripheral tissues. The chain is Hemoglobin subunit beta (hbb) from Melanogrammus aeglefinus (Haddock).